We begin with the raw amino-acid sequence, 234 residues long: uncharacterized protein (234 aa).

Transmembrane regions (helical) follow at residues 32-52 (GLRT…VSVL), 62-82 (IPAQ…LKEG), and 106-126 (QGLF…NIAL).

This sequence belongs to the MgtC/SapB family.

Its subcellular location is the cell membrane. This is an uncharacterized protein from Synechocystis sp. (strain ATCC 27184 / PCC 6803 / Kazusa).